The primary structure comprises 355 residues: Erythronate-4-phosphate dehydrogenase (355 aa).

S45 and T66 together coordinate substrate. Position 146 (D146) interacts with NAD(+). R206 is an active-site residue. An NAD(+)-binding site is contributed by D229. Residue E234 is part of the active site. H251 acts as the Proton donor in catalysis. G254 lines the NAD(+) pocket. Substrate is bound at residue Y255.

This sequence belongs to the D-isomer specific 2-hydroxyacid dehydrogenase family. PdxB subfamily. Homodimer.

Its subcellular location is the cytoplasm. The enzyme catalyses 4-phospho-D-erythronate + NAD(+) = (R)-3-hydroxy-2-oxo-4-phosphooxybutanoate + NADH + H(+). It participates in cofactor biosynthesis; pyridoxine 5'-phosphate biosynthesis; pyridoxine 5'-phosphate from D-erythrose 4-phosphate: step 2/5. Catalyzes the oxidation of erythronate-4-phosphate to 3-hydroxy-2-oxo-4-phosphonooxybutanoate. The sequence is that of Erythronate-4-phosphate dehydrogenase from Acinetobacter baumannii (strain ACICU).